A 361-amino-acid polypeptide reads, in one-letter code: Peptide chain release factor 1 (361 aa).

The residue at position 235 (Gln235) is an N5-methylglutamine.

This sequence belongs to the prokaryotic/mitochondrial release factor family. In terms of processing, methylated by PrmC. Methylation increases the termination efficiency of RF1.

The protein resides in the cytoplasm. Functionally, peptide chain release factor 1 directs the termination of translation in response to the peptide chain termination codons UAG and UAA. In Azoarcus sp. (strain BH72), this protein is Peptide chain release factor 1.